The chain runs to 571 residues: RNA polymerase sigma factor SigA (571 aa).

The interval methionine 321–threonine 391 is sigma-70 factor domain-2. An Interaction with polymerase core subunit RpoC motif is present at residues aspartate 345–glutamine 348. Residues glutamate 400–alanine 476 form a sigma-70 factor domain-3 region. A sigma-70 factor domain-4 region spans residues valine 489–histidine 542. The segment at residues leucine 515–alanine 534 is a DNA-binding region (H-T-H motif).

It belongs to the sigma-70 factor family. RpoD/SigA subfamily. In terms of assembly, interacts transiently with the RNA polymerase catalytic core.

It localises to the cytoplasm. Sigma factors are initiation factors that promote the attachment of RNA polymerase to specific initiation sites and are then released. This sigma factor is the primary sigma factor during exponential growth. The protein is RNA polymerase sigma factor SigA of Chlamydia trachomatis serovar D (strain ATCC VR-885 / DSM 19411 / UW-3/Cx).